A 166-amino-acid chain; its full sequence is Coiled-coil domain-containing protein 12 (166 aa).

The residue at position 1 (Met1) is an N-acetylmethionine. The tract at residues 1–56 (MEATTAGVGRLEEEALRRKERLKALREKTGRKDKEDGEPKTKHLREEEEEGEKHRE) is disordered. Residues 8–28 (VGRLEEEALRRKERLKALREK) are a coiled coil. Residues 10 to 56 (RLEEEALRRKERLKALREKTGRKDKEDGEPKTKHLREEEEEGEKHRE) show a composition bias toward basic and acidic residues. An N6-acetyllysine modification is found at Lys53. Lys94 participates in a covalent cross-link: Glycyl lysine isopeptide (Lys-Gly) (interchain with G-Cter in SUMO2). The stretch at 117-144 (KRDVAKKLEKLKKRTQRAIAELIRERLK) forms a coiled coil. The tract at residues 147 to 166 (EDSLASAVDAATEQKTCDSD) is disordered. Phosphoserine is present on residues Ser149 and Ser165.

This is Coiled-coil domain-containing protein 12 (CCDC12) from Homo sapiens (Human).